The chain runs to 209 residues: Chaperone protein TorD (209 aa).

Belongs to the TorD/DmsD family. TorD subfamily.

Its subcellular location is the cytoplasm. Its function is as follows. Involved in the biogenesis of TorA. Acts on TorA before the insertion of the molybdenum cofactor and, as a result, probably favors a conformation of the apoenzyme that is competent for acquiring the cofactor. This is Chaperone protein TorD from Shewanella sp. (strain MR-4).